The primary structure comprises 158 residues: Transcription factor BTF3 homolog 4 (158 aa).

K5 bears the N6-methyllysine mark. An NAC-A/B domain is found at 33 to 98; the sequence is TADDKKLQSS…AEAKPITEML (66 aa). The residue at position 111 (T111) is a Phosphothreonine. Positions 123–158 are disordered; it reads QVLDSKTPKPEDIDEEEDDVPDLVENFDEASKNEAN. A compositionally biased stretch (acidic residues) spans 134–150; the sequence is DIDEEEDDVPDLVENFD.

Belongs to the NAC-beta family.

This Bos taurus (Bovine) protein is Transcription factor BTF3 homolog 4 (BTF3L4).